Here is a 669-residue protein sequence, read N- to C-terminus: MRIRHVVFCLLALVYGAETSDDDLDERTNIFIRDKLIPALKLAEVTKVNFTRLHLCHCSREVGCNARTTGWVPGIEFLNETDRSFYENTCYTDGSCYQSARPSPEISHFGCMDEKSVTDETEFHDTAAKVCTNNTKDPHATVWICCDKGNFCANETIIHLAPGPQQSSTWLILTILALLTFIVLLGIAIFLTRKSWEAKFDWYIRFKPKPGDPLRETENNVPMVTMGDGAGSSVPEVAPIEQQGSTMSTSAGNSFPPGIMPNNMKDMLDVLEETSGSGMGPTTLHKLTIGGQIRLTGRVGSGRFGNVSRGDYRGEAVAVKVFNALDEPAFHKETEIFETRMLRHPNVLRYIGSDRVDTGFVTELWLVTEYHPSGSLHDFLLENTVNIETYYNLMRSTASGLAFLHNQIGGSKESNKPAMAHRDIKSKNIMVKNDLTCAIGDLGLSLSKPEDAASDIIANENYKCGTVRYLAPEILNSTMQFTVFESYQCADVYSFSLVMWETLCRCEDGDVLPREAATVIPYIEWTDRDPQDAQMFDVVCTRRLRPTENPLWKDHPEMKHIMEIIKTCWNGNPSARFTSYICRKRMDERQQLLLDKKAKAVAQTAGVTVQDRKILGPQKPKDESPANGAPRIVQKEIDREDEQENWRETAKTPNGHISSNDDSSRPLLG.

The first 19 residues, 1–19 (MRIRHVVFCLLALVYGAET), serve as a signal peptide directing secretion. Residues 20–170 (SDDDLDERTN…APGPQQSSTW (151 aa)) are Extracellular-facing. Residues Asn49, Asn79, Asn133, and Asn154 are each glycosylated (N-linked (GlcNAc...) asparagine). Residues 171–191 (LILTILALLTFIVLLGIAIFL) traverse the membrane as a helical segment. Topologically, residues 192 to 669 (TRKSWEAKFD…NDDSSRPLLG (478 aa)) are cytoplasmic. Residues 262-292 (NNMKDMLDVLEETSGSGMGPTTLHKLTIGGQ) form the GS domain. Positions 293-593 (IRLTGRVGSG…KRMDERQQLL (301 aa)) constitute a Protein kinase domain. Residues 299–307 (VGSGRFGNV) and Lys320 each bind ATP. Asp423 acts as the Proton acceptor in catalysis. 2 stretches are compositionally biased toward basic and acidic residues: residues 611–624 (DRKI…KDES) and 633–650 (VQKE…RETA). The interval 611–669 (DRKILGPQKPKDESPANGAPRIVQKEIDREDEQENWRETAKTPNGHISSNDDSSRPLLG) is disordered. Positions 651-661 (KTPNGHISSND) are enriched in polar residues.

Belongs to the protein kinase superfamily. TKL Ser/Thr protein kinase family. TGFB receptor subfamily. In terms of assembly, may interact with daf-4 to regulate dauer larva development. As to expression, head and ventral nerve cord from embryos to adults. Expressed in many sensory neurons. Subset of head neurons show coexpression with daf-4 when dauer/nondauer decision is made. Also expressed in non-neuronal cells: membraneous sheath surrounding the distal end of the intestine and in the distal tip cell of the gonad.

It is found in the membrane. It catalyses the reaction L-threonyl-[receptor-protein] + ATP = O-phospho-L-threonyl-[receptor-protein] + ADP + H(+). The catalysed reaction is L-seryl-[receptor-protein] + ATP = O-phospho-L-seryl-[receptor-protein] + ADP + H(+). In terms of biological role, probably involved in a TGF-beta pathway. May be a receptor for TGF-beta-like ligand daf-7. Controls the decision of whether or not larvae enter a developmentally arrested state, known as dauer, in response to environmental conditions. Involved in regulating entry into quiescence triggered by satiety. Involved in sensitivity to CO2 levels. In AWC neurons, acts to promote expression of srsx-3, a member of the GPCR family. The polypeptide is Cell surface receptor daf-1 (daf-1) (Caenorhabditis elegans).